Here is a 324-residue protein sequence, read N- to C-terminus: Phosphomevalonate decarboxylase (324 aa).

This sequence belongs to the phosphomevalonate decarboxylase family.

The catalysed reaction is (R)-5-phosphomevalonate + ATP = isopentenyl phosphate + ADP + phosphate + CO2. Its activity is regulated as follows. Is strongly inhibited by 6-fluoromevalonate monophosphate but shows negligible inhibition by 6-fluoromevalonate diphosphate (a potent inhibitor of the classical mevalonate pathway). Its function is as follows. Catalyzes the decarboxylation of mevalonate 5-phosphate (MVAP) to isopentenyl phosphate (IP). Functions in an alternate mevalonate (MVA) pathway leading to isopentenyl diphosphate (IPP), a key precursor for the biosynthesis of isoprenoid compounds such as archaeal membrane lipids. In Haloferax volcanii (strain ATCC 29605 / DSM 3757 / JCM 8879 / NBRC 14742 / NCIMB 2012 / VKM B-1768 / DS2) (Halobacterium volcanii), this protein is Phosphomevalonate decarboxylase (mvaD).